Consider the following 117-residue polypeptide: Immunoglobulin kappa variable 1-33 (117 aa).

An N-terminal signal peptide occupies residues 1–22 (MDMRVPAQLLGLLLLWLSGARC). The segment at 23 to 45 (DIQMTQSPSSLSASVGDRVTITC) is framework-1. In terms of domain architecture, Ig-like spans 24 to 117 (IQMTQSPSSL…YYCQQYDNLP (94 aa)). Cysteine 45 and cysteine 110 are joined by a disulfide. The segment at 46–56 (QASQDISNYLN) is complementarity-determining-1. Positions 57–71 (WYQQKPGKAPKLLIY) are framework-2. The tract at residues 72–78 (DASNLET) is complementarity-determining-2. Positions 79–110 (GVPSRFSGSGSGTDFTFTISSLQPEDIATYYC) are framework-3. A complementarity-determining-3 region spans residues 111–117 (QQYDNLP).

As to quaternary structure, immunoglobulins are composed of two identical heavy chains and two identical light chains; disulfide-linked.

The protein resides in the secreted. Its subcellular location is the cell membrane. In terms of biological role, v region of the variable domain of immunoglobulin light chains that participates in the antigen recognition. Immunoglobulins, also known as antibodies, are membrane-bound or secreted glycoproteins produced by B lymphocytes. In the recognition phase of humoral immunity, the membrane-bound immunoglobulins serve as receptors which, upon binding of a specific antigen, trigger the clonal expansion and differentiation of B lymphocytes into immunoglobulins-secreting plasma cells. Secreted immunoglobulins mediate the effector phase of humoral immunity, which results in the elimination of bound antigens. The antigen binding site is formed by the variable domain of one heavy chain, together with that of its associated light chain. Thus, each immunoglobulin has two antigen binding sites with remarkable affinity for a particular antigen. The variable domains are assembled by a process called V-(D)-J rearrangement and can then be subjected to somatic hypermutations which, after exposure to antigen and selection, allow affinity maturation for a particular antigen. The sequence is that of Immunoglobulin kappa variable 1-33 from Homo sapiens (Human).